The following is a 434-amino-acid chain: F-box/kelch-repeat protein At1g55270 (434 aa).

The F-box domain maps to 76 to 122 (PPLLPGLPDDLAVACLIRVPRAEHRKLRLVCKRWYRLASGNFFYSQR). 5 Kelch repeats span residues 129 to 178 (EEWV…VLSG), 180 to 227 (HLYL…VINN), 229 to 276 (LYVA…VYDK), 278 to 321 (WFLK…SLNG), and 325 to 371 (GLDC…LHNK).

The protein is F-box/kelch-repeat protein At1g55270 of Arabidopsis thaliana (Mouse-ear cress).